A 192-amino-acid polypeptide reads, in one-letter code: Putative B3 domain-containing protein At4g03160 (192 aa).

The disordered stretch occupies residues Val22–Glu44. A compositionally biased stretch (acidic residues) spans Asp25 to Glu44. A DNA-binding region (TF-B3) is located at residues Lys75–Arg173.

It is found in the nucleus. This Arabidopsis thaliana (Mouse-ear cress) protein is Putative B3 domain-containing protein At4g03160.